The following is a 119-amino-acid chain: Large ribosomal subunit protein bL20 (119 aa).

It belongs to the bacterial ribosomal protein bL20 family.

Functionally, binds directly to 23S ribosomal RNA and is necessary for the in vitro assembly process of the 50S ribosomal subunit. It is not involved in the protein synthesizing functions of that subunit. The protein is Large ribosomal subunit protein bL20 of Shewanella frigidimarina (strain NCIMB 400).